The chain runs to 436 residues: GTPase Der (436 aa).

2 consecutive EngA-type G domains span residues 4–167 (PTVA…PNEI) and 175–351 (IKFS…HAQN). Residues 10–17 (GRPNVGKS), 57–61 (DTGGI), 119–122 (NKVD), 181–188 (GRPNVGKS), 229–233 (DTAGM), and 294–297 (NKWD) each bind GTP. Residues 352–436 (LRISSSVLND…PIHLIARKRK (85 aa)) form the KH-like domain.

Belongs to the TRAFAC class TrmE-Era-EngA-EngB-Septin-like GTPase superfamily. EngA (Der) GTPase family. In terms of assembly, associates with the 50S ribosomal subunit.

In terms of biological role, GTPase that plays an essential role in the late steps of ribosome biogenesis. The protein is GTPase Der of Lactococcus lactis subsp. cremoris (strain SK11).